Here is a 198-residue protein sequence, read N- to C-terminus: Guanylate kinase (198 aa).

Residues 6–192 (KSIVIFTGPS…AAQEIREILH (187 aa)) form the Guanylate kinase-like domain. An ATP-binding site is contributed by 13–20 (GPSGVGKG).

Belongs to the guanylate kinase family.

The protein resides in the cytoplasm. It catalyses the reaction GMP + ATP = GDP + ADP. Functionally, essential for recycling GMP and indirectly, cGMP. The protein is Guanylate kinase of Mycoplasmopsis synoviae (strain 53) (Mycoplasma synoviae).